Reading from the N-terminus, the 853-residue chain is Replication protein A 70 kDa DNA-binding subunit C (853 aa).

The tract at residues 118–282 (PKEPGHSSIN…QSAYQPQQPP (165 aa)) is disordered. Composition is skewed to polar residues over residues 124–144 (SSIN…SEQQ), 159–173 (SANS…NSSD), 180–194 (SANS…SSSD), 201–211 (SANSPQRQVVH), 222–249 (PQVS…SSNA), and 263–278 (TATT…AYQP). Positions 312–399 (WTIKVRVTSK…NDYEIHLDSA (88 aa)) form a DNA-binding region, OB. The C4-type zinc-finger motif lies at 602-628 (CPIMNGDRPCSKKVTNNGDGTWRCEKC).

It belongs to the replication factor A protein 1 family. Heterotrimer of RPA1, RPA2 and RPA3 (canonical replication protein A complex).

The protein localises to the nucleus. Component of the replication protein A complex (RPA) required for DNA recombination, repair and replication. The activity of RPA is mediated by single-stranded DNA binding and protein interactions. Probably involved in repair of double-strand DNA breaks (DSBs) induced by genotoxic stresses. This chain is Replication protein A 70 kDa DNA-binding subunit C (RPA1C), found in Arabidopsis thaliana (Mouse-ear cress).